The primary structure comprises 225 residues: Uridylate kinase (225 aa).

Residue 9–10 (GS) coordinates ATP. G46 contacts UMP. ATP-binding residues include G47 and R51. Residues D67 and 115–121 (THPAHTT) each bind UMP. Residues T141, N142, Y147, and D150 each contribute to the ATP site.

Belongs to the UMP kinase family. In terms of assembly, homohexamer.

It is found in the cytoplasm. It carries out the reaction UMP + ATP = UDP + ADP. It functions in the pathway pyrimidine metabolism; CTP biosynthesis via de novo pathway; UDP from UMP (UMPK route): step 1/1. Inhibited by UTP. In terms of biological role, catalyzes the reversible phosphorylation of UMP to UDP. This Methanococcus aeolicus (strain ATCC BAA-1280 / DSM 17508 / OCM 812 / Nankai-3) protein is Uridylate kinase.